We begin with the raw amino-acid sequence, 86 residues long: Exodeoxyribonuclease 7 small subunit (86 aa).

The tract at residues 67–86 (LSDPAQPEASEPFDPPSHDG) is disordered.

The protein belongs to the XseB family. In terms of assembly, heterooligomer composed of large and small subunits.

The protein resides in the cytoplasm. The enzyme catalyses Exonucleolytic cleavage in either 5'- to 3'- or 3'- to 5'-direction to yield nucleoside 5'-phosphates.. Its function is as follows. Bidirectionally degrades single-stranded DNA into large acid-insoluble oligonucleotides, which are then degraded further into small acid-soluble oligonucleotides. This is Exodeoxyribonuclease 7 small subunit from Stenotrophomonas maltophilia (strain K279a).